Here is a 197-residue protein sequence, read N- to C-terminus: Small ribosomal subunit protein uS4c (197 aa).

The S4 RNA-binding domain maps to 82-143; sequence MRLDNILFRL…KQRSKALIQN (62 aa).

The protein belongs to the universal ribosomal protein uS4 family. Part of the 30S ribosomal subunit. Contacts protein S5. The interaction surface between S4 and S5 is involved in control of translational fidelity.

The protein resides in the plastid. Its subcellular location is the chloroplast. In terms of biological role, one of the primary rRNA binding proteins, it binds directly to 16S rRNA where it nucleates assembly of the body of the 30S subunit. With S5 and S12 plays an important role in translational accuracy. The sequence is that of Small ribosomal subunit protein uS4c (rps4) from Gladiolus papilio (Goldblotch gladiolus).